A 329-amino-acid chain; its full sequence is Serine, glycine and glutamine-rich protein (329 aa).

Positions 1-16 (MKTVLLFVVLVGLAYC) are cleaved as a signal peptide. The segment covering 38 to 48 (SSSSSSSSSSS) has biased composition (low complexity). The interval 38-80 (SSSSSSSSSSSSGGGGSSGGGASGGGGGSSSGGGGASGGGGGG) is disordered. Residues 49–80 (SGGGGSSGGGASGGGGGSSSGGGGASGGGGGG) show a composition bias toward gly residues.

Prismatic layer of shell (at protein level). Expressed primarily in the mantle with highest level in the mantle edge and lower level in the mantle pallium.

The protein resides in the secreted. This Pinctada maxima (Silver-lipped pearl oyster) protein is Serine, glycine and glutamine-rich protein.